Here is a 447-residue protein sequence, read N- to C-terminus: Probable glycine dehydrogenase (decarboxylating) subunit 1 (447 aa).

It belongs to the GcvP family. N-terminal subunit subfamily. In terms of assembly, the glycine cleavage system is composed of four proteins: P, T, L and H. In this organism, the P 'protein' is a heterodimer of two subunits.

It catalyses the reaction N(6)-[(R)-lipoyl]-L-lysyl-[glycine-cleavage complex H protein] + glycine + H(+) = N(6)-[(R)-S(8)-aminomethyldihydrolipoyl]-L-lysyl-[glycine-cleavage complex H protein] + CO2. In terms of biological role, the glycine cleavage system catalyzes the degradation of glycine. The P protein binds the alpha-amino group of glycine through its pyridoxal phosphate cofactor; CO(2) is released and the remaining methylamine moiety is then transferred to the lipoamide cofactor of the H protein. The polypeptide is Probable glycine dehydrogenase (decarboxylating) subunit 1 (Halalkalibacterium halodurans (strain ATCC BAA-125 / DSM 18197 / FERM 7344 / JCM 9153 / C-125) (Bacillus halodurans)).